A 222-amino-acid polypeptide reads, in one-letter code: Triosephosphate isomerase (222 aa).

9 to 11 (NLK) provides a ligand contact to substrate. His93 functions as the Electrophile in the catalytic mechanism. Glu141 functions as the Proton acceptor in the catalytic mechanism. Substrate-binding positions include Ile146, Gly181, and 202 to 203 (AS).

The protein belongs to the triosephosphate isomerase family. Homotetramer; dimer of dimers.

The protein localises to the cytoplasm. It carries out the reaction D-glyceraldehyde 3-phosphate = dihydroxyacetone phosphate. Its pathway is carbohydrate biosynthesis; gluconeogenesis. It functions in the pathway carbohydrate degradation; glycolysis; D-glyceraldehyde 3-phosphate from glycerone phosphate: step 1/1. In terms of biological role, involved in the gluconeogenesis. Catalyzes stereospecifically the conversion of dihydroxyacetone phosphate (DHAP) to D-glyceraldehyde-3-phosphate (G3P). The sequence is that of Triosephosphate isomerase from Methanoculleus marisnigri (strain ATCC 35101 / DSM 1498 / JR1).